Reading from the N-terminus, the 106-residue chain is Small ribosomal subunit protein uS10 (106 aa).

The protein belongs to the universal ribosomal protein uS10 family. As to quaternary structure, part of the 30S ribosomal subunit.

Its function is as follows. Involved in the binding of tRNA to the ribosomes. The polypeptide is Small ribosomal subunit protein uS10 (Solibacter usitatus (strain Ellin6076)).